The primary structure comprises 272 residues: Cyclase-like protein 2 (272 aa).

Residues 1–24 (MAVPPLFFLLTLLSLPSLLISAGA) form the signal peptide.

It belongs to the Cyclase 1 superfamily.

It localises to the secreted. It is found in the extracellular space. Its subcellular location is the extracellular matrix. Its function is as follows. May function redundantly with CYCLASE1 for normal plant growth, development and viability. This chain is Cyclase-like protein 2, found in Arabidopsis thaliana (Mouse-ear cress).